A 304-amino-acid polypeptide reads, in one-letter code: MVKTAMLGAVALVIALGGTCGVADALPLGQTDDPMIVAHRAGTRDFPENTVLAITNAVAAGVDGMWLTVQVSSDGVPVLYRPSDLATLTDGAGPVNSKTVQQLQQLNAGWNFTTPGVEGHPYRQRATPIPTLEQAIGATPPDMTLFLDLKQTPPQPLVSAVAQVLTRTGAAGRSIVYSTNADITAAASRQEGLQVAESRDVTRQRLFNMALNHHCDPQPDPGKWAGFELHRDVTVTEEFTLGSGISAVNAELWDEASVDCFRSQSGMKVMGFAVKTVDDYRLAHKIGLDAVLVDSPLAAQQWRH.

The signal sequence occupies residues 1–25; that stretch reads MVKTAMLGAVALVIALGGTCGVADA. A GP-PDE domain is found at 34-303; the sequence is PMIVAHRAGT…DSPLAAQQWR (270 aa).

This is an uncharacterized protein from Mycobacterium tuberculosis (strain CDC 1551 / Oshkosh).